A 125-amino-acid polypeptide reads, in one-letter code: Secreted RxLR effector protein RXLR-C13 (125 aa).

A signal peptide spans 1 to 23 (MVNSLTFTLVVVCLVRSCDGVAA). The RxLR-dEER motif lies at 43-73 (RVLQETATANDDVKKLSTSTKVDSKLNQEIK). Residue Asn85 is glycosylated (N-linked (GlcNAc...) asparagine). A helical transmembrane segment spans residues 106–123 (FFILATILLFPIAAYMVA).

This sequence belongs to the RxLR effector family.

Its subcellular location is the secreted. The protein resides in the host endoplasmic reticulum membrane. Secreted effector that does not suppress pattern-triggered immunity (PTI) in plant host. This is Secreted RxLR effector protein RXLR-C13 from Plasmopara halstedii (Downy mildew of sunflower).